A 141-amino-acid polypeptide reads, in one-letter code: Inclusion membrane protein D (141 aa).

Helical transmembrane passes span 38-58 and 68-88; these read VAVA…GLLF and VLAA…ALVG.

It localises to the secreted. It is found in the host vacuole. The protein resides in the host pathogen-containing vacuole. The protein localises to the host pathogen-containing vacuole membrane. In terms of biological role, inclusion membrane protein probably involved in early modification events of the chlamydial inclusion. The polypeptide is Inclusion membrane protein D (incD) (Chlamydia trachomatis serovar D (strain ATCC VR-885 / DSM 19411 / UW-3/Cx)).